We begin with the raw amino-acid sequence, 258 residues long: Polysialic acid transport protein KpsM (258 aa).

Positions 30–251 (LGYLWAILEP…FIGLALYRTR (222 aa)) constitute an ABC transmembrane type-2 domain. A run of 6 helical transmembrane segments spans residues 33 to 53 (LWAI…FGYI), 61 to 81 (ISFP…SSIS), 110 to 130 (ALLE…IVWM), 144 to 164 (VLTW…FMVV), 175 to 195 (LPIL…LHSI), and 227 to 247 (GVSL…GLAL).

This sequence belongs to the ABC-2 integral membrane protein family.

It localises to the cell inner membrane. Its function is as follows. KpsM and KpsT constitute a system for the transport of polysialic acid across the cytoplasmic membrane. The chain is Polysialic acid transport protein KpsM (kpsM) from Escherichia coli.